A 1911-amino-acid polypeptide reads, in one-letter code: Protein TIC 214 (1911 aa).

A run of 6 helical transmembrane segments spans residues 41–61 (IINS…FSIG), 81–103 (ISAT…YAPL), 108–128 (GKPH…FFWN), 147–167 (FNIQ…HFIL), 195–215 (IGWL…LFWI), and 238–258 (IFSI…PLPI). Disordered stretches follow at residues 265–299 (ETSE…STEE), 798–817 (DSEE…KEEN), and 1599–1647 (NQNQ…RKKK). Residues 268–297 (ETEESEENEEESDIEITSEPKEQDEEEGST) are compositionally biased toward acidic residues. Basic and acidic residues-rich tracts occupy residues 1603–1615 (QEKK…RDLG) and 1623–1635 (QKQK…EKNY).

Belongs to the TIC214 family. As to quaternary structure, part of the Tic complex.

It localises to the plastid. The protein resides in the chloroplast inner membrane. Its function is as follows. Involved in protein precursor import into chloroplasts. May be part of an intermediate translocation complex acting as a protein-conducting channel at the inner envelope. In Lemna minor (Common duckweed), this protein is Protein TIC 214.